Consider the following 125-residue polypeptide: C-X-C motif chemokine 9 (125 aa).

An N-terminal signal peptide occupies residues 1–22 (MKKSGVLFLLGIILLVLIGVQG). 2 disulfides stabilise this stretch: Cys31–Cys58 and Cys33–Cys74. Residues 93–125 (VSQKKKQKNGKKHQKKKVLKVRKSQRSRQKKTT) form a disordered region. Residues 94–125 (SQKKKQKNGKKHQKKKVLKVRKSQRSRQKKTT) show a composition bias toward basic residues.

Belongs to the intercrine alpha (chemokine CxC) family.

Its subcellular location is the secreted. In terms of biological role, cytokine that affects the growth, movement, or activation state of cells that participate in immune and inflammatory response. Chemotactic for activated T-cells. Binds to CXCR3. The protein is C-X-C motif chemokine 9 (CXCL9) of Homo sapiens (Human).